An 801-amino-acid polypeptide reads, in one-letter code: Phenylalanine--tRNA ligase beta subunit (801 aa).

The tRNA-binding domain maps to 39–153; the sequence is AEGLSKLVVG…EGAIPGDSIF (115 aa). In terms of domain architecture, B5 spans 406–481; that stretch reads TEPVEVSTTL…RIYGYEKLPT (76 aa). Positions 459, 465, 468, and 469 each coordinate Mg(2+). The 94-residue stretch at 708-801 folds into the FDX-ACB domain; it reads TKYPSVSRDI…LVEKVNAEIR (94 aa).

It belongs to the phenylalanyl-tRNA synthetase beta subunit family. Type 1 subfamily. As to quaternary structure, tetramer of two alpha and two beta subunits. It depends on Mg(2+) as a cofactor.

It is found in the cytoplasm. It carries out the reaction tRNA(Phe) + L-phenylalanine + ATP = L-phenylalanyl-tRNA(Phe) + AMP + diphosphate + H(+). The protein is Phenylalanine--tRNA ligase beta subunit of Streptococcus agalactiae serotype V (strain ATCC BAA-611 / 2603 V/R).